The following is a 337-amino-acid chain: tRNA pseudouridine synthase D (337 aa).

Aspartate 77 serves as the catalytic Nucleophile. A TRUD domain is found at 152 to 308 (GFPNYFTEQR…ARDFHWEFVE (157 aa)).

It belongs to the pseudouridine synthase TruD family.

The enzyme catalyses uridine(13) in tRNA = pseudouridine(13) in tRNA. Its function is as follows. Responsible for synthesis of pseudouridine from uracil-13 in transfer RNAs. In Mannheimia succiniciproducens (strain KCTC 0769BP / MBEL55E), this protein is tRNA pseudouridine synthase D.